A 574-amino-acid polypeptide reads, in one-letter code: NADH-ubiquinone oxidoreductase chain 5 (574 aa).

The next 16 membrane-spanning stretches (helical) occupy residues 10–30, 50–70, 87–107, 111–131, 141–161, 181–203, 211–231, 240–260, 280–300, 301–321, 340–360, 381–401, 423–443, 458–478, 489–509, and 554–574; these read VASK…LYMV, MMMT…VVMI, FINR…MLIF, LIIL…LVIY, GMIT…AIAW, YQAL…SSWL, TPVS…FLLI, VWWF…MAGL, LGMM…FHMV, THAM…HSHM, TSCL…SGFY, LILF…MCVV, MLLL…ILPL, TLML…TTNM, IINY…QFMM, and TPMN…LVAI.

This sequence belongs to the complex I subunit 5 family.

The protein localises to the mitochondrion inner membrane. It catalyses the reaction a ubiquinone + NADH + 5 H(+)(in) = a ubiquinol + NAD(+) + 4 H(+)(out). In terms of biological role, core subunit of the mitochondrial membrane respiratory chain NADH dehydrogenase (Complex I) that is believed to belong to the minimal assembly required for catalysis. Complex I functions in the transfer of electrons from NADH to the respiratory chain. The immediate electron acceptor for the enzyme is believed to be ubiquinone. This is NADH-ubiquinone oxidoreductase chain 5 (ND5) from Lumbricus terrestris (Common earthworm).